We begin with the raw amino-acid sequence, 244 residues long: Gasdermin-like protein rcd-1-2 (244 aa).

Residues 1-22 (MDNEEWFPLKQTHYPPPTIPSM) form a disordered region.

The protein belongs to the gasdermin family. Heterooligomer; the heterooligomer with rcd-1-1 forms a ring-shaped pore complex when inserted in the membrane.

The protein localises to the cytoplasm. Its subcellular location is the cell membrane. Its function is as follows. Gasdermin-like protein involved in heterokaryon incompatibility, a process that ensures that during spontaneous vegetative cell fusion, only compatible cells from the same colony survive (non-self-recognition). In N.crassa, the rcd-1 locus exists as 2 incompatible alleles, rcd-1-1 (AC Q7SBA0) and rcd-1-2 (this entry). During the allorecognition process, forms a heterooligomer with rcd-1-1, thereby forming a functional gasdermin-like complex that binds to membranes and forms pores, triggering cell death. Binds negatively charged phospholipids, such as cardiolipin and phosphatidylserine. Also binds to phosphoinositides, preferentially to phosphatidylinositol-3-phosphate (PtdIns-3-P), PtdIns-5-P and PtdIns-3,5-P2. The polypeptide is Gasdermin-like protein rcd-1-2 (Neurospora crassa).